Consider the following 403-residue polypeptide: Leu/Ile/Val-binding protein homolog 8 (403 aa).

Positions 1-26 (MRLSRLLIGASLGVALSSTVFTAALA) are cleaved as a signal peptide.

It belongs to the leucine-binding protein family.

In terms of biological role, component of an amino-acid transport system. This chain is Leu/Ile/Val-binding protein homolog 8, found in Brucella abortus (strain 2308).